The chain runs to 374 residues: DNA replication and repair protein RecF (374 aa).

Position 30–37 (30–37) interacts with ATP; sequence GHNAQGKT.

The protein belongs to the RecF family.

Its subcellular location is the cytoplasm. In terms of biological role, the RecF protein is involved in DNA metabolism; it is required for DNA replication and normal SOS inducibility. RecF binds preferentially to single-stranded, linear DNA. It also seems to bind ATP. This chain is DNA replication and repair protein RecF, found in Limosilactobacillus reuteri (strain DSM 20016) (Lactobacillus reuteri).